The chain runs to 285 residues: Diphthine methyl ester synthase (285 aa).

Residues Leu9, Asp84, Gly87, 112 to 113 (SI), Leu163, Val221, and His246 contribute to the S-adenosyl-L-methionine site.

The protein belongs to the diphthine synthase family.

It localises to the cytoplasm. The enzyme catalyses 2-[(3S)-amino-3-carboxypropyl]-L-histidyl-[translation elongation factor 2] + 4 S-adenosyl-L-methionine = diphthine methyl ester-[translation elongation factor 2] + 4 S-adenosyl-L-homocysteine + 3 H(+). It functions in the pathway protein modification; peptidyl-diphthamide biosynthesis. Its function is as follows. S-adenosyl-L-methionine-dependent methyltransferase that catalyzes four methylations of the modified target histidine residue in translation elongation factor 2 (EF-2), to form an intermediate called diphthine methyl ester. The four successive methylation reactions represent the second step of diphthamide biosynthesis. The protein is Diphthine methyl ester synthase (dph5) of Emericella nidulans (strain FGSC A4 / ATCC 38163 / CBS 112.46 / NRRL 194 / M139) (Aspergillus nidulans).